The sequence spans 619 residues: Replication restart protein PriA (619 aa).

Residues 119 to 285 (LKELQKHPAS…KDKALVRLKG (167 aa)) enclose the Helicase ATP-binding domain. 132–139 (GDTGSGKT) lines the ATP pocket. A DEAH box motif is present at residues 228–231 (DEEH). Positions 336, 339, 345, 348, 363, 366, 376, and 379 each coordinate Zn(2+). The region spanning 371 to 532 (PIPKICNACQ…ELYPPFSRLC (162 aa)) is the Helicase C-terminal domain.

It belongs to the helicase family. PriA subfamily. In terms of assembly, component of the replication restart primosome. Zn(2+) is required as a cofactor.

It carries out the reaction Couples ATP hydrolysis with the unwinding of duplex DNA by translocating in the 3'-5' direction.. It catalyses the reaction ATP + H2O = ADP + phosphate + H(+). In terms of biological role, initiates the restart of stalled replication forks, which reloads the replicative helicase on sites other than the origin of replication. Recognizes and binds to abandoned replication forks and remodels them to uncover a helicase loading site. Promotes assembly of the primosome at these replication forks. In Helicobacter pylori (strain J99 / ATCC 700824) (Campylobacter pylori J99), this protein is Replication restart protein PriA.